The sequence spans 438 residues: GTPase Der (438 aa).

EngA-type G domains are found at residues 4–168 (PIVA…KNEG) and 177–352 (IKIA…DNYC). GTP is bound by residues 10–17 (GRPNVGKS), 57–61 (DTGGI), 120–123 (NKID), 183–190 (GKPNVGKS), 230–234 (DTAGV), and 295–298 (NKWD). Residues 353 to 437 (KQIKTGILND…GIKLEFRERK (85 aa)) enclose the KH-like domain.

The protein belongs to the TRAFAC class TrmE-Era-EngA-EngB-Septin-like GTPase superfamily. EngA (Der) GTPase family. In terms of assembly, associates with the 50S ribosomal subunit.

Its function is as follows. GTPase that plays an essential role in the late steps of ribosome biogenesis. This Clostridium kluyveri (strain NBRC 12016) protein is GTPase Der.